We begin with the raw amino-acid sequence, 597 residues long: Arginine--tRNA ligase (597 aa).

The 'HIGH' region motif lies at 137 to 147 (PNIAKEMHVGH).

It belongs to the class-I aminoacyl-tRNA synthetase family. Monomer.

The protein resides in the cytoplasm. The enzyme catalyses tRNA(Arg) + L-arginine + ATP = L-arginyl-tRNA(Arg) + AMP + diphosphate. The protein is Arginine--tRNA ligase of Parasynechococcus marenigrum (strain WH8102).